The sequence spans 240 residues: tRNA (guanine-N(1)-)-methyltransferase (240 aa).

Residues Gly-108 and 127–132 (IGDYVL) contribute to the S-adenosyl-L-methionine site.

It belongs to the RNA methyltransferase TrmD family. Homodimer.

The protein localises to the cytoplasm. It carries out the reaction guanosine(37) in tRNA + S-adenosyl-L-methionine = N(1)-methylguanosine(37) in tRNA + S-adenosyl-L-homocysteine + H(+). Its function is as follows. Specifically methylates guanosine-37 in various tRNAs. The chain is tRNA (guanine-N(1)-)-methyltransferase from Lactobacillus johnsonii (strain CNCM I-12250 / La1 / NCC 533).